The sequence spans 363 residues: Capsid protein (363 aa).

Residues 72 to 111 (KKVEELNESLKAAILAGAEAEDLRNKLKDISQRYASQLEI) are a coiled coil. The tract at residues 122–144 (LKKKGHEQPLTGSGSSEPVHAES) is disordered.

The protein localises to the virion. The polypeptide is Capsid protein (Citrus leaf blotch virus (isolate Nagami kumquat/France/SRA-153/1984) (CLBV)).